A 503-amino-acid chain; its full sequence is Cysteine--tRNA ligase (503 aa).

Position 31 (cysteine 31) interacts with Zn(2+). The 'HIGH' region motif lies at 33–43 (PTVYDYAHIGN). Residues cysteine 225, histidine 264, and glutamate 268 each coordinate Zn(2+). Residues 297–301 (KMSKS) carry the 'KMSKS' region motif. An ATP-binding site is contributed by lysine 300.

Belongs to the class-I aminoacyl-tRNA synthetase family. As to quaternary structure, monomer. It depends on Zn(2+) as a cofactor.

The protein localises to the cytoplasm. The catalysed reaction is tRNA(Cys) + L-cysteine + ATP = L-cysteinyl-tRNA(Cys) + AMP + diphosphate. This chain is Cysteine--tRNA ligase, found in Bartonella tribocorum (strain CIP 105476 / IBS 506).